The sequence spans 152 residues: Regulator of G-protein signaling 21 (152 aa).

The RGS domain occupies Asn-21–Val-137.

In terms of tissue distribution, expressed ubiquitously.

Its function is as follows. Inhibits signal transduction by increasing the GTPase activity of G protein alpha subunits thereby driving them into their inactive GDP-bound form. The polypeptide is Regulator of G-protein signaling 21 (RGS21) (Homo sapiens (Human)).